We begin with the raw amino-acid sequence, 603 residues long: Alpha-1,2-mannosyltransferase algn-9 (603 aa).

A disordered region spans residues 1–25 (MVTHRRKGGSGPPQKPPPRIVDRSS). Residues 1–108 (MVTHRRKGGS…EYSPVYAIRS (108 aa)) lie on the Lumenal side of the membrane. A helical transmembrane segment spans residues 109 to 129 (YFYIYLHYIPASLFANLFGDT). Lys130 is a topological domain (cytoplasmic). Residues 131-151 (IVVFTLIRLTIGLFCLLGEYY) form a helical membrane-spanning segment. Topologically, residues 152 to 166 (AFDAICKKINIATGR) are lumenal. A helical membrane pass occupies residues 167 to 187 (FFILFSIFSSGMFLASTAFVP). Residues 188–195 (SSFCMAIT) are Cytoplasmic-facing. Residues 196–216 (FYILGAYLNENWTAGIFCVAF) form a helical membrane-spanning segment. Topologically, residues 217 to 218 (ST) are lumenal. The chain crosses the membrane as a helical span at residues 219–239 (MVGWPFSAVLGLPIVADMLLL). Residues 240 to 245 (KGLRIR) lie on the Cytoplasmic side of the membrane. The chain crosses the membrane as a helical span at residues 246 to 266 (FILTSLVIGLCIGGVQVITDS). The Lumenal segment spans residues 267-310 (HYFGKTVLAPLNIFLYNVVSGPGPSLYGEEPLSFYIKNLFNNWN). A helical membrane pass occupies residues 311–331 (IVIFAAPFGFPLSLAYFTKVW). Over 332-343 (MSQDRNVALYQR) the chain is Cytoplasmic. A helical membrane pass occupies residues 344 to 364 (FAPIILLAVTTAAWLLIFGSQ). Topologically, residues 365–370 (AHKEER) are lumenal. The chain crosses the membrane as a helical span at residues 371 to 391 (FLFPIYPFIAFFAALALDATN). Residues 392-397 (RLCLKK) are Cytoplasmic-facing. A helical transmembrane segment spans residues 398–418 (LGMDNILSILFILCFAILSAS). Residues 419-603 (RTYSIHNNYG…TCTLYRKSNL (185 aa)) are Lumenal-facing. Asn443 is a glycosylation site (N-linked (GlcNAc...) asparagine).

This sequence belongs to the glycosyltransferase 22 family.

The protein resides in the endoplasmic reticulum membrane. It carries out the reaction an alpha-D-Man-(1-&gt;2)-alpha-D-Man-(1-&gt;2)-alpha-D-Man-(1-&gt;3)-[alpha-D-Man-(1-&gt;3)-alpha-D-Man-(1-&gt;6)]-beta-D-Man-(1-&gt;4)-beta-D-GlcNAc-(1-&gt;4)-alpha-D-GlcNAc-diphospho-di-trans,poly-cis-dolichol + a di-trans,poly-cis-dolichyl beta-D-mannosyl phosphate = an alpha-D-Man-(1-&gt;2)-alpha-D-Man-(1-&gt;2)-alpha-D-Man-(1-&gt;3)-[alpha-D-Man-(1-&gt;2)-alpha-D-Man-(1-&gt;3)-alpha-D-Man-(1-&gt;6)]-beta-D-Man-(1-&gt;4)-beta-D-GlcNAc-(1-&gt;4)-alpha-D-GlcNAc-diphospho-di-trans,poly-cis-dolichol + a di-trans,poly-cis-dolichyl phosphate + H(+). The catalysed reaction is an alpha-D-Man-(1-&gt;2)-alpha-D-Man-(1-&gt;2)-alpha-D-Man-(1-&gt;3)-[alpha-D-Man-(1-&gt;2)-alpha-D-Man-(1-&gt;3)-[alpha-D-Man-(1-&gt;6)]-alpha-D-Man-(1-&gt;6)]-beta-D-Man-(1-&gt;4)-beta-D-GlcNAc-(1-&gt;4)-alpha-D-GlcNAc-diphospho-di-trans,poly-cis-dolichol + a di-trans,poly-cis-dolichyl beta-D-mannosyl phosphate = an alpha-D-Man-(1-&gt;2)-alpha-D-Man-(1-&gt;2)-alpha-D-Man-(1-&gt;3)-[alpha-D-Man-(1-&gt;2)-alpha-D-Man-(1-&gt;3)-[alpha-D-Man-(1-&gt;2)-alpha-D-Man-(1-&gt;6)]-alpha-D-Man-(1-&gt;6)]-beta-D-Man-(1-&gt;4)-beta-D-GlcNAc-(1-&gt;4)-alpha-D-GlcNAc-diphospho-di-trans,poly-cis-dolichol + a di-trans,poly-cis-dolichyl phosphate + H(+). Its pathway is protein modification; protein glycosylation. Its function is as follows. Catalyzes the transfer of mannose from Dol-P-Man to lipid-linked oligosaccharides. This chain is Alpha-1,2-mannosyltransferase algn-9, found in Caenorhabditis elegans.